The following is a 224-amino-acid chain: 7-cyano-7-deazaguanine synthase (224 aa).

Residue 10 to 20 (VSGGLDSATVL) participates in ATP binding. Zn(2+)-binding residues include C189, C199, C202, and C205.

This sequence belongs to the QueC family. Zn(2+) serves as cofactor.

It catalyses the reaction 7-carboxy-7-deazaguanine + NH4(+) + ATP = 7-cyano-7-deazaguanine + ADP + phosphate + H2O + H(+). It functions in the pathway purine metabolism; 7-cyano-7-deazaguanine biosynthesis. Catalyzes the ATP-dependent conversion of 7-carboxy-7-deazaguanine (CDG) to 7-cyano-7-deazaguanine (preQ(0)). The chain is 7-cyano-7-deazaguanine synthase from Nitrosococcus oceani (strain ATCC 19707 / BCRC 17464 / JCM 30415 / NCIMB 11848 / C-107).